Consider the following 350-residue polypeptide: Methionine aminopeptidase 1D, chloroplastic/mitochondrial (350 aa).

The transit peptide at methionine 1–serine 49 directs the protein to the chloroplast and mitochondrion. Glycine 50 is modified (N-acetylglycine). Residues arginine 71–proline 90 are disordered. Histidine 180 serves as a coordination point for substrate. Residues aspartate 197, aspartate 208, and histidine 271 each contribute to the a divalent metal cation site. Histidine 278 is a binding site for substrate. A divalent metal cation contacts are provided by glutamate 303 and glutamate 334.

It belongs to the peptidase M24A family. Methionine aminopeptidase type 1 subfamily. Requires Co(2+) as cofactor. Zn(2+) serves as cofactor. Mn(2+) is required as a cofactor. The cofactor is Fe(2+). As to expression, ubiquitous. Preferentially expressed in green tissues.

It is found in the plastid. The protein localises to the chloroplast. Its subcellular location is the mitochondrion. It carries out the reaction Release of N-terminal amino acids, preferentially methionine, from peptides and arylamides.. In terms of biological role, removes the N-terminal methionine from nascent proteins. The N-terminal methionine is often cleaved when the second residue in the primary sequence is small and uncharged (Met-Ala-, Cys, Gly, Pro, Ser, Thr, or Val). The polypeptide is Methionine aminopeptidase 1D, chloroplastic/mitochondrial (MAP1D) (Arabidopsis thaliana (Mouse-ear cress)).